The primary structure comprises 388 residues: 2-Hydroxyacid oxidase (388 aa).

A disordered region spans residues 1 to 21 (MENQFKNNNNSSSIETSNQFS). Residues 26-384 (NRLDSFVSVS…NNSIIWDQNK (359 aa)) enclose the FMN hydroxy acid dehydrogenase domain. Y52 contacts glyoxylate. FMN is bound by residues 105–107 (PWA), S134, 156–158 (QLY), and T184. Y158 contributes to the glyoxylate binding site. R193 is a glyoxylate binding site. 2 residues coordinate FMN: K255 and S277. Glyoxylate is bound by residues H279 and R282. H279 acts as the Proton acceptor in catalysis. FMN is bound by residues 310–314 (DGGIR) and 333–334 (GR).

It belongs to the FMN-dependent alpha-hydroxy acid dehydrogenase family. In terms of assembly, homotetramer. FMN serves as cofactor.

It carries out the reaction glycolate + O2 = glyoxylate + H2O2. The enzyme catalyses a (2S)-2-hydroxycarboxylate + O2 = a 2-oxocarboxylate + H2O2. Functionally, catalyzes the oxidation of glycolate to glyoxylate, with a reduction of O2 to H2O2. May use other 2-hydroxyacids as substrates. This is 2-Hydroxyacid oxidase (haox) from Dictyostelium discoideum (Social amoeba).